A 204-amino-acid chain; its full sequence is Quinol oxidase subunit 3 (204 aa).

A run of 6 helical transmembrane segments spans residues 27 to 47 (FWIFLGAEIVLFSTLFATFFV), 66 to 86 (LVMIMTFLLLISSFTCGIAVH), 95 to 115 (GVVIWTIITLLLGAGFVGCEI), 118 to 138 (FVHYVHEGAALSTSAFWSGFF), 140 to 160 (LLGTHGTHVTIGIFWITGILI), and 184 to 204 (FLDVVWIFIFTGVYLMGLGGL).

The protein belongs to the cytochrome c oxidase subunit 3 family.

It localises to the cell membrane. The enzyme catalyses 2 a quinol + O2 = 2 a quinone + 2 H2O. Functionally, catalyzes quinol oxidation with the concomitant reduction of oxygen to water. Major component for energy conversion during vegetative growth. The polypeptide is Quinol oxidase subunit 3 (qoxC) (Bacillus subtilis (strain 168)).